The chain runs to 317 residues: MATH domain and coiled-coil domain-containing protein At3g58240 (317 aa).

The MATH domain occupies 6 to 131 (DNKFTWVIKN…DGEVEIVAQI (126 aa)). Residues 254-305 (KLDWLEKKLDEVKEIKKKCERVTEMEKELHDLMNKHTNVSKLLEKEKLEIKN) are a coiled coil.

The chain is MATH domain and coiled-coil domain-containing protein At3g58240 from Arabidopsis thaliana (Mouse-ear cress).